The following is a 1004-amino-acid chain: uncharacterized protein (1004 aa).

Asn-27 is a glycosylation site (N-linked (GlcNAc...) asparagine). 4 helical membrane-spanning segments follow: residues Phe-38–Ile-58, Ile-77–Ile-97, Leu-188–Tyr-208, and Phe-324–Ser-344. 3 N-linked (GlcNAc...) asparagine glycosylation sites follow: Asn-392, Asn-418, and Asn-421. 2 helical membrane passes run Met-422–Phe-442 and Met-599–Met-619. Asn-627 carries an N-linked (GlcNAc...) asparagine glycan. 2 helical membrane passes run Gly-726–Phe-746 and Gly-823–Ser-843. A glycan (N-linked (GlcNAc...) asparagine) is linked at Asn-859.

It to yeast YPR031w.

Its subcellular location is the membrane. This is an uncharacterized protein from Schizosaccharomyces pombe (strain 972 / ATCC 24843) (Fission yeast).